The chain runs to 222 residues: Large ribosomal subunit protein uL4 (222 aa).

The segment at 50 to 72 is disordered; the sequence is TRGRSEVSHSTKKPFRQKGTGNA.

Belongs to the universal ribosomal protein uL4 family. In terms of assembly, part of the 50S ribosomal subunit.

Functionally, one of the primary rRNA binding proteins, this protein initially binds near the 5'-end of the 23S rRNA. It is important during the early stages of 50S assembly. It makes multiple contacts with different domains of the 23S rRNA in the assembled 50S subunit and ribosome. Forms part of the polypeptide exit tunnel. This Chlamydia trachomatis serovar A (strain ATCC VR-571B / DSM 19440 / HAR-13) protein is Large ribosomal subunit protein uL4.